A 100-amino-acid chain; its full sequence is uncharacterized protein (100 aa).

Its subcellular location is the secreted. This is an uncharacterized protein from Mycobacterium leprae (strain TN).